A 609-amino-acid chain; its full sequence is MHQNIRNIAIIAHVDHGKTTLLDQLLQQSGTFQKHEEKKERIMDSNDLEKERGITILSKNTSIKWKEYKINIVDTPGHADFGGEVERVMSMVDSVLLIVDALDGPMPQTRFVTKKAFKYGLNPIVVINKIDRKNSRPDWVINEIFDLFVNLNANDKQLDFPIIYTSAILGTSGINYLDMKENMIPLYEAIIKYAPAPNVDPNQKFQMQISQLDYNNYLGVIGVGRIKQGHIKPNDSVVIIDSLGNTRNGKINKVLNYFGLKRLEIQKGDAGDIIAITGLNKLNISDTICHPDNLCPLPPLIIDEPTVNMFFSVNTSPFSGKEGKYITSRQILERLKKETIHNVALQVKETKDANIFSVSGRGELHLSILIENMRREGFELEVSRPKIIFREINDIKQEPFENIILDIEEKHQGNIMKFIGERKGELKNITVDPNKRIRLEYLLSSRALIGFRTEFMSITSGTGLFYSSFSHYQKYQKNDIGQRKNGVLISNSTGMAVAFALFNLQERGKLFLGHGTQVYEGQIIGLHNRSNDLTVNCLTGKKLTNMRASGTDEAIILTTFTKFTLEEALSFINDDELVEITPKSIRLRKRYLKENERKKANRDRTTIVD.

In terms of domain architecture, tr-type G spans 3–198 (QNIRNIAIIA…AIIKYAPAPN (196 aa)). Residues 15–20 (DHGKTT) and 128–131 (NKID) contribute to the GTP site.

The protein belongs to the TRAFAC class translation factor GTPase superfamily. Classic translation factor GTPase family. BipA subfamily. Monomer.

Its subcellular location is the cytoplasm. It carries out the reaction GTP + H2O = GDP + phosphate + H(+). In terms of biological role, a 50S ribosomal subunit assembly protein with GTPase activity, required for 50S subunit assembly at low temperatures, may also play a role in translation. Binds GTP and analogs. Binds the 70S ribosome between the 30S and 50S subunits, in a similar position as ribosome-bound EF-G; it contacts a number of ribosomal proteins, both rRNAs and the A-site tRNA. This is Large ribosomal subunit assembly factor BipA from Buchnera aphidicola subsp. Schizaphis graminum (strain Sg).